The primary structure comprises 525 residues: Serine/threonine-protein kinase YPK3 (525 aa).

Residues Ser90 and Ser105 each carry the phosphoserine modification. Position 107 is a phosphothreonine (Thr107). Residues 128 to 424 (FKPVRVLGQG…KTGANNKPTK (297 aa)) enclose the Protein kinase domain. Residues 134–142 (LGQGAYGKV) and Lys157 contribute to the ATP site. Residues 170 to 193 (ATDSKREDEDKNDGNNNDNDDGLS) form a disordered region. Residues 172-182 (DSKREDEDKND) show a composition bias toward basic and acidic residues. Asp277 (proton acceptor) is an active-site residue. Ser321 carries the post-translational modification Phosphoserine; by PKH1 or PKH2. One can recognise an AGC-kinase C-terminal domain in the interval 445 to 524 (RKIDWKLLES…KASGSYLEKY (80 aa)). At Thr490 the chain carries Phosphothreonine; by TORC1. The residue at position 513 (Ser513) is a Phosphoserine; by TORC1.

It belongs to the protein kinase superfamily. AGC Ser/Thr protein kinase family. S6 kinase subfamily. Post-translationally, phosphorylated by PKA in a TORC1-dependent manner. Phosphorylation at PKA consensus sites RRxS/T decreases upon rapamycin treatment.

It localises to the cytoplasm. The enzyme catalyses L-seryl-[protein] + ATP = O-phospho-L-seryl-[protein] + ADP + H(+). The catalysed reaction is L-threonyl-[protein] + ATP = O-phospho-L-threonyl-[protein] + ADP + H(+). Its function is as follows. AGC kinase which plays a role in TOR complex 1 (TORC1) signaling pathway which mediates temporal control of cell growth in response to nutrients. Required for phosphorylation of ribosomal protein S6 (RPS6A/RPS6B) at 'Ser-232' and 'Ser-233'. The polypeptide is Serine/threonine-protein kinase YPK3 (Saccharomyces cerevisiae (strain ATCC 204508 / S288c) (Baker's yeast)).